The sequence spans 32 residues: Photosystem II reaction center protein T (32 aa).

Residues 3–23 traverse the membrane as a helical segment; it reads ALVYVFLLIGTLMIIFFAIFF.

This sequence belongs to the PsbT family. As to quaternary structure, PSII is composed of 1 copy each of membrane proteins PsbA, PsbB, PsbC, PsbD, PsbE, PsbF, PsbH, PsbI, PsbJ, PsbK, PsbL, PsbM, PsbT, PsbY, PsbZ, Psb30/Ycf12, at least 3 peripheral proteins of the oxygen-evolving complex and a large number of cofactors. It forms dimeric complexes.

It localises to the plastid. Its subcellular location is the chloroplast thylakoid membrane. Functionally, found at the monomer-monomer interface of the photosystem II (PS II) dimer, plays a role in assembly and dimerization of PSII. PSII is a light-driven water plastoquinone oxidoreductase, using light energy to abstract electrons from H(2)O, generating a proton gradient subsequently used for ATP formation. This chain is Photosystem II reaction center protein T, found in Cyanidioschyzon merolae (strain NIES-3377 / 10D) (Unicellular red alga).